The following is a 70-amino-acid chain: Conotoxin Mr3.8 (70 aa).

The signal sequence occupies residues 1 to 24; that stretch reads MLKMGVVLFIFLVLFPLATLQLDA. A propeptide spanning residues 25–54 is cleaved from the precursor; that stretch reads DQPVERYAKNKQLFNPHKRRGIILRAPGKR. 3 disulfide bridges follow: C55-C67, C56-C68, and C61-C65.

It belongs to the conotoxin M superfamily. As to expression, expressed by the venom duct.

The protein resides in the secreted. In terms of biological role, in vitro, inhibits proliferation of the mice ovarian cancer cells ID8. The sequence is that of Conotoxin Mr3.8 from Conus marmoreus (Marble cone).